We begin with the raw amino-acid sequence, 136 residues long: Active regulator of SIRT1 (136 aa).

Position 7 is a citrulline (Arg7). The interval 13-58 (LAASEAPRDPPGQAKPRGAPVKRPRKTKAIQAQKLRNSAKGKVPKS) is disordered. A Phosphoserine modification is found at Ser84.

Belongs to the AROS family. As to quaternary structure, part of the small subunit (SSU) processome, composed of more than 70 proteins and the RNA chaperone small nucleolar RNA (snoRNA) U3. Interacts with RPS19; the interaction is direct and mediates the integration of RPS19 in state post-A1. Interacts with SIRT1. Citrullinated by PADI4. As to expression, widely expressed (at protein level).

The protein resides in the nucleus. It localises to the nucleolus. In terms of biological role, part of the small subunit (SSU) processome, first precursor of the small eukaryotic ribosomal subunit. During the assembly of the SSU processome in the nucleolus, many ribosome biogenesis factors, an RNA chaperone and ribosomal proteins associate with the nascent pre-rRNA and work in concert to generate RNA folding, modifications, rearrangements and cleavage as well as targeted degradation of pre-ribosomal RNA by the RNA exosome. Acts as a chaperone that specifically mediates the integration of RPS19 in state post-A1. Direct regulator of SIRT1. Enhances SIRT1-mediated deacetylation of p53/TP53, thereby participating in inhibition of p53/TP53-mediated transcriptional activity. The polypeptide is Active regulator of SIRT1 (Homo sapiens (Human)).